Consider the following 521-residue polypeptide: Phomenoic acid biosynthesis cluster-specific transcriptional regulator (521 aa).

The zn(2)-C6 fungal-type DNA-binding region spans 46-76; sequence HCWQCRRSCVVCDFTQPGCQRCSAAGVSCPG.

It is found in the nucleus. Transcriptional regulator; part of the gene cluster that mediates the biosynthesis of phomenoic acid, a long chain aliphatic carboxylic acid that does not appear to be essential for pathogenicity but may play a role in allowing to outcompete other fungi in the environmental niche via its antifungal properties. Positively regulates the expression of the cluster and subsequent production of phomenoic acid. The protein is Phomenoic acid biosynthesis cluster-specific transcriptional regulator of Leptosphaeria maculans (strain JN3 / isolate v23.1.3 / race Av1-4-5-6-7-8) (Blackleg fungus).